Reading from the N-terminus, the 480-residue chain is Chromosomal replication initiator protein DnaA (480 aa).

The interval 1 to 71 (MRHDALFERV…TTLVQQEDSE (71 aa)) is domain I, interacts with DnaA modulators. The segment at 71–137 (EILKVEILVR…RPVQAPLFGS (67 aa)) is domain II. The tract at residues 138–360 (PLDQRYGFDS…GAFNQLLFRR (223 aa)) is domain III, AAA+ region. ATP contacts are provided by Gly184, Gly186, Lys187, and Thr188. The domain IV, binds dsDNA stretch occupies residues 361–480 (SFEPQLSIER…IELLKRLINE (120 aa)).

The protein belongs to the DnaA family. In terms of assembly, oligomerizes as a right-handed, spiral filament on DNA at oriC.

Its subcellular location is the cytoplasm. In terms of biological role, plays an essential role in the initiation and regulation of chromosomal replication. ATP-DnaA binds to the origin of replication (oriC) to initiate formation of the DNA replication initiation complex once per cell cycle. Binds the DnaA box (a 9 base pair repeat at the origin) and separates the double-stranded (ds)DNA. Forms a right-handed helical filament on oriC DNA; dsDNA binds to the exterior of the filament while single-stranded (ss)DNA is stabiized in the filament's interior. The ATP-DnaA-oriC complex binds and stabilizes one strand of the AT-rich DNA unwinding element (DUE), permitting loading of DNA polymerase. After initiation quickly degrades to an ADP-DnaA complex that is not apt for DNA replication. Binds acidic phospholipids. In Rhizobium meliloti (strain 1021) (Ensifer meliloti), this protein is Chromosomal replication initiator protein DnaA.